A 548-amino-acid chain; its full sequence is Cytochrome P450 monooxygenase lcsK (548 aa).

2 helical membrane passes run 28–48 (HAYP…LWAF) and 68–88 (VLLF…RLFF). N-linked (GlcNAc...) asparagine glycans are attached at residues asparagine 172, asparagine 223, asparagine 242, and asparagine 404. Cysteine 487 serves as a coordination point for heme.

Belongs to the cytochrome P450 family. Heme serves as cofactor.

The protein resides in the membrane. It functions in the pathway secondary metabolite biosynthesis. Cytochrome P450 monooxygenase; part of the gene cluster that mediates the biosynthesis of the lipopeptide antibiotics leucinostatins that show extensive biological activities, including antimalarial, antiviral, antibacterial, antifungal, and antitumor activities, as well as phytotoxic. Leucinostatin A contains nine amino acid residues, including the unusual amino acid 4-methyl-L-proline (MePro), 2-amino-6-hydroxy-4-methyl-8-oxodecanoic acid (AHyMeOA), 3-hydroxyleucine (HyLeu), alpha-aminoisobutyric acid (AIB), beta-Ala, a 4-methylhex-2-enoic acid at the N-terminus as well as a N1,N1-dimethylpropane-1,2-diamine (DPD) at the C-terminus. The biosynthesis of leucinostatins is probably initiated with the assembly of 4-methylhex-2-enoic acid by a reducing PKS. Two reducing polyketide synthases, lcsB and lcsC, have been identified in the cluster and it is not clear which is the one that assembles 4-methylhex-2-enoic acid since both contain KS, AT, DH, cMT, ER, KR and ACP domains. The polyketide residue might be transferred to the NRPS lcsA, mediated by two additional enzymes, the acyl-CoA ligase lcsD and the thioesterase lcsE. The linear polyketide carboxylic acid, which is released from PKS, is converted to a CoA thioester by lcsD, and then lcsE hydrolyzes the thiol bond and shuttles the polyketide intermediate to lcsA. The C domain of the first module catalyzed the condensation of 4-methylhex-2-enoic acid and MePro carried by domain A1, followed by successive condensations of nine amino acids to trigger the elongation of the linear peptide. A5 and A6 domains of lcsA are proposed to incorporate leucine, A2 AHyMeOA, and A3 incorporates HyLeu. A4, A7 and A8 incorporate AIB. The AHyMeOA in leucinostatin A activated by the A2 might be produced by the second PKS (lcsB or lcsC) present within the cluster. The MePro is probably produced via leucine cyclization and may originate from a separate pathway, independent of the cluster. Another nonproteinogenic amino acid, beta-Ala, could be produced by an aspartic acid decarboxylase also localized outside of the cluster. Two candidates are VFPBJ_01400 and VFPBJ_10476. The final peptide scaffold may be released by the NAD(P)H-dependent thioester reductase (TE) at the C-terminal region of lcsA. Transamination of the lcsA product by the transaminase lcsP may produce DPD at the C-terminus. Further hydroxylation steps performed alternatively by the cytochrome P450 monooxygenases lcsI, lcsK and lcsN then yield the non-methylated leucinostatins precursor. It is also possible that leucines can be hydroxylated prior to their incorporation into the peptide. Varying extents of methylation then lead to the formation of leucinostatins A and B. The chain is Cytochrome P450 monooxygenase lcsK from Purpureocillium lilacinum (Paecilomyces lilacinus).